The following is a 375-amino-acid chain: Chaperone protein DnaJ (375 aa).

Positions 5–70 (DYYEILGVSK…QKRAAYDQYG (66 aa)) constitute a J domain. A CR-type zinc finger spans residues 130–208 (GVTKEIRIPT…CHGHGRVEKS (79 aa)). Zn(2+)-binding residues include Cys-143, Cys-146, Cys-160, Cys-163, Cys-182, Cys-185, Cys-196, and Cys-199. 4 CXXCXGXG motif repeats span residues 143 to 150 (CDVCHGSG), 160 to 167 (CPTCHGSG), 182 to 189 (CPHCQGRG), and 196 to 203 (CHKCHGHG).

The protein belongs to the DnaJ family. In terms of assembly, homodimer. The cofactor is Zn(2+).

The protein localises to the cytoplasm. Its function is as follows. Participates actively in the response to hyperosmotic and heat shock by preventing the aggregation of stress-denatured proteins and by disaggregating proteins, also in an autonomous, DnaK-independent fashion. Unfolded proteins bind initially to DnaJ; upon interaction with the DnaJ-bound protein, DnaK hydrolyzes its bound ATP, resulting in the formation of a stable complex. GrpE releases ADP from DnaK; ATP binding to DnaK triggers the release of the substrate protein, thus completing the reaction cycle. Several rounds of ATP-dependent interactions between DnaJ, DnaK and GrpE are required for fully efficient folding. Also involved, together with DnaK and GrpE, in the DNA replication of plasmids through activation of initiation proteins. In Salmonella paratyphi A (strain ATCC 9150 / SARB42), this protein is Chaperone protein DnaJ.